A 330-amino-acid chain; its full sequence is Beta-ketoacyl-[acyl-carrier-protein] synthase III (330 aa).

Active-site residues include Cys-115 and His-255. The ACP-binding stretch occupies residues 256-260 (QANFR). Asn-285 is a catalytic residue.

The protein belongs to the thiolase-like superfamily. FabH family. Homodimer.

The protein resides in the cytoplasm. The enzyme catalyses malonyl-[ACP] + acetyl-CoA + H(+) = 3-oxobutanoyl-[ACP] + CO2 + CoA. It participates in lipid metabolism; fatty acid biosynthesis. Functionally, catalyzes the condensation reaction of fatty acid synthesis by the addition to an acyl acceptor of two carbons from malonyl-ACP. Catalyzes the first condensation reaction which initiates fatty acid synthesis and may therefore play a role in governing the total rate of fatty acid production. Possesses both acetoacetyl-ACP synthase and acetyl transacylase activities. Its substrate specificity determines the biosynthesis of branched-chain and/or straight-chain of fatty acids. This chain is Beta-ketoacyl-[acyl-carrier-protein] synthase III, found in Helicobacter pylori (strain HPAG1).